The sequence spans 275 residues: Transmembrane protein 45B (275 aa).

A run of 7 helical transmembrane segments spans residues histidine 7–leucine 27, isoleucine 47–valine 67, leucine 94–leucine 114, valine 116–valine 136, isoleucine 146–isoleucine 166, leucine 180–glycine 200, and leucine 212–valine 232. Phosphoserine is present on residues serine 270 and serine 272.

It belongs to the TMEM45 family. (Microbial infection) Interacts with sindbis virus nsP1 and nsP4; these interactions lead to viral RNA replication inhibition. As to quaternary structure, (Microbial infection) Interacts with chikungunya virus nsP1 and nsP4; these interactions lead to viral RNA replication inhibition.

It localises to the endosome membrane. Its subcellular location is the lysosome membrane. It is found in the golgi apparatus. The protein localises to the trans-Golgi network membrane. Plays a role in innate immunity. Mechanistically, promotes alphaviruses RNA degradation by interacting with the viral polymerase nsP4 and the mRNA-capping enzyme nsP1 and thereby interfering with the interaction between viral RNA and nsP1. This Homo sapiens (Human) protein is Transmembrane protein 45B (TMEM45B).